We begin with the raw amino-acid sequence, 401 residues long: MAKEKFDRSKPHLNIGTIGHVDHGKTTLTAAITTTLAKLVGGKNKAIAYDQIDNAPEEKARGITIATSHQEYETPNRHYAHVDCPGHADYVKNMITGAAQMDAAILVVSATDGAMPQTKEHILLARQVGVPYIVVYLNKADMLAADERDDMVEMVKEEIKDLLNKYNFPGDKTPFISGSALKALEGEDSDLGMKSILKLMEAVDTYVPNPTRIVDKPFLMPVEDVFSITGRGTVATGRVEQGVLKINDEIEIVGIRDTTKSVVTGIEMFRKLLDQAEAGDNIGALLRGTKKEDIERGQVLAKPGTITPHRKFKAEVYVLTKDEGGRHTPFFNNYRPQFYFRTTDITGVCNLPGGMEMVMPGDNVTMSIELIHPIAMDQGLKFAIREGGRTIGSGVVAEIVE.

The 202-residue stretch at 10 to 211 (KPHLNIGTIG…AVDTYVPNPT (202 aa)) folds into the tr-type G domain. A G1 region spans residues 19 to 26 (GHVDHGKT). 19–26 (GHVDHGKT) lines the GTP pocket. A Mg(2+)-binding site is contributed by T26. Residues 62–66 (GITIA) form a G2 region. Residues 83–86 (DCPG) are G3. GTP contacts are provided by residues 83-87 (DCPGH) and 138-141 (NKAD). The segment at 138–141 (NKAD) is G4. Residues 179–181 (SAL) are G5.

The protein belongs to the TRAFAC class translation factor GTPase superfamily. Classic translation factor GTPase family. EF-Tu/EF-1A subfamily. As to quaternary structure, monomer.

The protein resides in the cytoplasm. It carries out the reaction GTP + H2O = GDP + phosphate + H(+). In terms of biological role, GTP hydrolase that promotes the GTP-dependent binding of aminoacyl-tRNA to the A-site of ribosomes during protein biosynthesis. This Leptospira biflexa serovar Patoc (strain Patoc 1 / Ames) protein is Elongation factor Tu.